The sequence spans 376 residues: Alanine racemase (376 aa).

The Proton acceptor; specific for D-alanine role is filled by Lys40. An N6-(pyridoxal phosphate)lysine modification is found at Lys40. Residue Arg138 participates in substrate binding. Tyr270 functions as the Proton acceptor; specific for L-alanine in the catalytic mechanism. Met317 lines the substrate pocket.

This sequence belongs to the alanine racemase family. Pyridoxal 5'-phosphate serves as cofactor.

It catalyses the reaction L-alanine = D-alanine. Its pathway is amino-acid biosynthesis; D-alanine biosynthesis; D-alanine from L-alanine: step 1/1. Catalyzes the interconversion of L-alanine and D-alanine. May also act on other amino acids. This chain is Alanine racemase (alr), found in Lactobacillus gasseri (strain ATCC 33323 / DSM 20243 / BCRC 14619 / CIP 102991 / JCM 1131 / KCTC 3163 / NCIMB 11718 / NCTC 13722 / AM63).